The sequence spans 239 residues: MLNIGLSGSTGKMGETILERIDKFKDCKIAAKFNSTNNLDDLDNFCKNSDVIIDFSTPEILEKLINYALKHNTKLVIGTTGLQPQHFKLLEKAAQTLPVLYSANMSIGANLLSYLAKEVTKILDDYDVEILETHHRNKKDSPSGTAVMLAETIASKKGLNITFNRGNRLRSEKEIGISSLRGGNVHSIHEISFLGDDEIITLKHEALNKNSFSIGAIKAAIWLQDKPSALYSMQDIYKI.

NAD(+)-binding positions include Gly-8 to Met-13, Gly-78 to Thr-80, and Ser-102 to Met-105. Residue His-134 is the Proton donor/acceptor of the active site. His-135 provides a ligand contact to (S)-2,3,4,5-tetrahydrodipicolinate. Lys-138 acts as the Proton donor in catalysis. Position 144–145 (Gly-144–Thr-145) interacts with (S)-2,3,4,5-tetrahydrodipicolinate.

The protein belongs to the DapB family.

The protein resides in the cytoplasm. The enzyme catalyses (S)-2,3,4,5-tetrahydrodipicolinate + NAD(+) + H2O = (2S,4S)-4-hydroxy-2,3,4,5-tetrahydrodipicolinate + NADH + H(+). It catalyses the reaction (S)-2,3,4,5-tetrahydrodipicolinate + NADP(+) + H2O = (2S,4S)-4-hydroxy-2,3,4,5-tetrahydrodipicolinate + NADPH + H(+). It participates in amino-acid biosynthesis; L-lysine biosynthesis via DAP pathway; (S)-tetrahydrodipicolinate from L-aspartate: step 4/4. Functionally, catalyzes the conversion of 4-hydroxy-tetrahydrodipicolinate (HTPA) to tetrahydrodipicolinate. The polypeptide is 4-hydroxy-tetrahydrodipicolinate reductase (Rickettsia peacockii (strain Rustic)).